Reading from the N-terminus, the 173-residue chain is Ferritin heavy chain (173 aa).

The Ferritin-like diiron domain occupies 6–155; sequence QNFHEECERG…GYVTNLKRCG (150 aa). Fe cation is bound by residues Glu23, Glu58, His61, Glu103, and Gln137.

It belongs to the ferritin family. Oligomer of 24 subunits. There are two types of subunits: L (light) chain and H (heavy) chain. The functional molecule is roughly spherical and contains a central cavity into which the insoluble mineral iron core is deposited.

The protein resides in the cytoplasm. The enzyme catalyses 4 Fe(2+) + O2 + 4 H(+) = 4 Fe(3+) + 2 H2O. Stores iron in a soluble, non-toxic, readily available form. Important for iron homeostasis. Has ferroxidase activity. Iron is taken up in the ferrous form and deposited as ferric hydroxides after oxidation. The protein is Ferritin heavy chain of Echinococcus granulosus (Hydatid tapeworm).